The following is a 429-amino-acid chain: SET domain-containing protein 14 (429 aa).

Cysteine 26, cysteine 29, cysteine 39, cysteine 42, cysteine 48, cysteine 52, histidine 60, and cysteine 64 together coordinate Zn(2+). The segment at 26–64 adopts an MYND-type zinc-finger fold; that stretch reads CNQCLTSMAELKKCSACRRLAYCSQECQRADWKLHKVEC.

It is found in the nucleus. This is SET domain-containing protein 14 (set-14) from Caenorhabditis elegans.